The sequence spans 313 residues: Methylenetetrahydrofolate dehydrogenase [NAD(+)] (313 aa).

Cys152 is a catalytic residue. NAD(+) contacts are provided by residues 187–188, 210–211, and 270–272; these read RS, DI, and FAG.

This sequence belongs to the tetrahydrofolate dehydrogenase/cyclohydrolase family. Homodimer.

The enzyme catalyses (6R)-5,10-methylene-5,6,7,8-tetrahydrofolate + NAD(+) = (6R)-5,10-methenyltetrahydrofolate + NADH. It functions in the pathway one-carbon metabolism; tetrahydrofolate interconversion. Functionally, catalyzes oxidation of cytoplasmic one-carbon units for purine biosynthesis. The sequence is that of Methylenetetrahydrofolate dehydrogenase [NAD(+)] (thfA) from Dictyostelium discoideum (Social amoeba).